Consider the following 1873-residue polypeptide: Kinesin-related protein 8 (1873 aa).

The 401-residue stretch at 13 to 413 (CVRVALRVRP…LKYAYRARNI (401 aa)) folds into the Kinesin motor domain. 93–100 (GQTGSGKT) contacts ATP. Disordered regions lie at residues 231–302 (NSPV…DERN), 463–567 (VSIP…SPTS), 778–797 (LDKDKDKDKDNKDKDQYYED), 841–891 (KIDS…ARKT), 930–1008 (KQRV…TEQL), 1179–1207 (PQPLQSQQQQQEKQQKQSNSEQVLEQRSS), 1244–1267 (LPSQQQLSSSQELAEEYTSPSTSS), 1328–1360 (TTTTTTTTNKQQVPKSFAPLNNTNNNNNNNNSS), and 1403–1467 (NNIT…PRPD). Residues 232-247 (SPVTSSSTSSTSTSSS) show a composition bias toward low complexity. Residues 280–297 (IDEDEEDDEEDEDDDIMS) show a composition bias toward acidic residues. Low complexity predominate over residues 473 to 567 (TPTLTNNNNN…NNTATPSPTS (95 aa)). Positions 715–933 (FENDSEELSD…KEIEVHKQRV (219 aa)) form a coiled coil. 5 stretches are compositionally biased toward low complexity: residues 937 to 1005 (INSK…TPTT), 1182 to 1200 (LQSQQQQQEKQQKQSNSEQ), 1244 to 1254 (LPSQQQLSSSQ), 1348 to 1358 (NNTNNNNNNNN), and 1423 to 1454 (SLQSSPLSLSLESGLATALANNGNNNNNSNNN). 5 WD repeats span residues 1506-1546 (GHDG…NMLD), 1548-1587 (SSPGPVRSLCINGSSGCMFSGGAERTVKVWDIRSPGNTNL), 1589-1628 (IFKTPSDVNCLVTYGNYVVSGLENGTFKVWDIRHMQKPLK), 1636-1673 (HHTGTIFSMSVTSKYLVTGSRDHTINLFHRDSFVLAQK), and 1677-1714 (PHHDGVTSIAVLDDVIYSGSRDRTIKRWDVSSINNLIN). The segment at 1758–1780 (NNNNNNSSNNNKSSSAPSSTTSS) is disordered. WD repeat units follow at residues 1805-1842 (AHNDWVNCLCIHNGMIFSGGKDSNIKGWDPLLSSNSLL) and 1844-1873 (GHESSISCLTSSKEFLFSGSTDKCIKIWKC).

The protein belongs to the TRAFAC class myosin-kinesin ATPase superfamily. Kinesin family.

The protein resides in the cytoplasm. The protein localises to the cytoskeleton. Microtubule-associated force-producing protein that plays a role in organelle transport. Its motor activity is directed toward the microtubule's plus end. Cooperates with kif10 and dynein to organize interphase microtubules. The chain is Kinesin-related protein 8 (kif8) from Dictyostelium discoideum (Social amoeba).